The following is a 329-amino-acid chain: Dapdiamide synthesis protein DdaC (329 aa).

It depends on Fe(2+) as a cofactor.

Its pathway is antibiotic biosynthesis. Involved in dapdiamide antibiotics biosynthesis. Catalyzes the alpha-ketoglutarate-dependent epoxidation of the covalently bound N-beta-fumaramoyl-DAP-S-DdaD to generate N-beta-epoxysuccinamoyl-DAP in thioester linkage to DdaD. This chain is Dapdiamide synthesis protein DdaC, found in Enterobacter agglomerans (Erwinia herbicola).